The following is a 325-amino-acid chain: Methionyl-tRNA formyltransferase (325 aa).

Ser-112–Pro-115 provides a ligand contact to (6S)-5,6,7,8-tetrahydrofolate.

Belongs to the Fmt family.

The enzyme catalyses L-methionyl-tRNA(fMet) + (6R)-10-formyltetrahydrofolate = N-formyl-L-methionyl-tRNA(fMet) + (6S)-5,6,7,8-tetrahydrofolate + H(+). Attaches a formyl group to the free amino group of methionyl-tRNA(fMet). The formyl group appears to play a dual role in the initiator identity of N-formylmethionyl-tRNA by promoting its recognition by IF2 and preventing the misappropriation of this tRNA by the elongation apparatus. In Roseiflexus sp. (strain RS-1), this protein is Methionyl-tRNA formyltransferase.